Consider the following 440-residue polypeptide: 3-phosphoshikimate 1-carboxyvinyltransferase (440 aa).

3-phosphoshikimate-binding residues include Lys-31, Ser-32, and Arg-36. Residue Lys-31 participates in phosphoenolpyruvate binding. The phosphoenolpyruvate site is built by Gly-104 and Arg-133. 3-phosphoshikimate contacts are provided by Ser-178, Gln-180, Asp-328, and Lys-355. Position 180 (Gln-180) interacts with phosphoenolpyruvate. Residue Asp-328 is the Proton acceptor of the active site. 2 residues coordinate phosphoenolpyruvate: Arg-359 and Arg-401.

It belongs to the EPSP synthase family. Monomer.

It localises to the cytoplasm. It catalyses the reaction 3-phosphoshikimate + phosphoenolpyruvate = 5-O-(1-carboxyvinyl)-3-phosphoshikimate + phosphate. It functions in the pathway metabolic intermediate biosynthesis; chorismate biosynthesis; chorismate from D-erythrose 4-phosphate and phosphoenolpyruvate: step 6/7. In terms of biological role, catalyzes the transfer of the enolpyruvyl moiety of phosphoenolpyruvate (PEP) to the 5-hydroxyl of shikimate-3-phosphate (S3P) to produce enolpyruvyl shikimate-3-phosphate and inorganic phosphate. The sequence is that of 3-phosphoshikimate 1-carboxyvinyltransferase from Thermosynechococcus vestitus (strain NIES-2133 / IAM M-273 / BP-1).